A 192-amino-acid chain; its full sequence is AFELPSLPYAIDALEPHISKETLEFHHGKHHNTYVVKLNGLIPGTKFENKSLEEIVCSSDGGVFNNAAQIWNHTFYWNSLSPNGGGAPTGAVADAINAKWGSFDAFKEALNDKAVNNFGSSWTWLVKLADGSLDIVNTSNAATPLTDDGVTPILTVDLWEHAYYIDYRNVRPDYLKGFWSLVNWEFANANFA.

Residues His26, His73, Asp157, and His161 each coordinate Fe cation.

This sequence belongs to the iron/manganese superoxide dismutase family. Homodimer. It depends on Fe cation as a cofactor.

The enzyme catalyses 2 superoxide + 2 H(+) = H2O2 + O2. Functionally, destroys superoxide anion radicals which are normally produced within the cells and which are toxic to biological systems. The sequence is that of Superoxide dismutase [Fe] from Pseudoalteromonas translucida (strain TAC 125).